Consider the following 122-residue polypeptide: Large ribosomal subunit protein uL14 (122 aa).

Belongs to the universal ribosomal protein uL14 family. Part of the 50S ribosomal subunit. Forms a cluster with proteins L3 and L19. In the 70S ribosome, L14 and L19 interact and together make contacts with the 16S rRNA in bridges B5 and B8.

Its function is as follows. Binds to 23S rRNA. Forms part of two intersubunit bridges in the 70S ribosome. The polypeptide is Large ribosomal subunit protein uL14 (Pseudomonas paraeruginosa (strain DSM 24068 / PA7) (Pseudomonas aeruginosa (strain PA7))).